Consider the following 2222-residue polypeptide: Voltage-dependent R-type calcium channel subunit alpha-1E (2222 aa).

Residues 1–40 (MALYNPIPVRQNCFTVNRSLFIFGEDNIVRKYAKKLIDWP) are Cytoplasmic-facing. One copy of the I repeat lies at 27–305 (NIVRKYAKKL…LVLGVLSGEF (279 aa)). The helical transmembrane segment at 41–59 (PFEYMILATIIANCIVLAL) threads the bilayer. Over 60–78 (EQHLPEDDKTPMSRRLEKT) the chain is Extracellular. A helical transmembrane segment spans residues 79-97 (EPYFIGIFCFEAGIKIVAL). The Cytoplasmic portion of the chain corresponds to 98 to 109 (GFIFHKGSYLRN). A helical transmembrane segment spans residues 110 to 124 (GWNVMDFIVVLSGIL). The Extracellular segment spans residues 125–136 (ATAGTHFNTHVD). A helical transmembrane segment spans residues 137-156 (LRTLRAVRVLRPLKLVSGIP). Residues 157-174 (SLQIVLKSIMKAMVPLLQ) are Cytoplasmic-facing. The helical transmembrane segment at 175–195 (IGLLLFFAILMFAIIGLEFYS) threads the bilayer. At 196 to 277 (GKLHRACFMN…NTNDALGATW (82 aa)) the chain is on the extracellular side. N-linked (GlcNAc...) asparagine glycosylation is present at Asn-205. The chain crosses the membrane as a helical span at residues 278-301 (NWLYFIPLIIIGSFFVLNLVLGVL). Residues 302 to 427 (SGEFAKERER…ISIRHMVKSQ (126 aa)) lie on the Cytoplasmic side of the membrane. A binding to the beta subunit region spans residues 325–342 (QQIERELNGYRAWIDKAE). Asp-377 provides a ligand contact to Ca(2+). Ser-378 carries the phosphoserine modification. Residues Ser-379, Glu-381, and Cys-383 each coordinate Ca(2+). Thr-391 is modified (phosphothreonine). The stretch at 413 to 657 (ERLLRISIRH…VFLAIAVDNL (245 aa)) is one II repeat. Residues 428-447 (VFYWIVLSVVALNTACVAIV) form a helical membrane-spanning segment. Over 448-460 (HHNQPQWLTHLLY) the chain is Extracellular. A helical transmembrane segment spans residues 461 to 480 (YAEFLFLGLFLLEMSLKMYG). At 481-489 (MGPRLYFHS) the chain is on the cytoplasmic side. A helical membrane pass occupies residues 490–508 (SFNCFDFGVTVGSIFEVVW). At 509 to 518 (AIFRPGTSFG) the chain is on the extracellular side. The chain crosses the membrane as a helical span at residues 519–537 (ISVLRALRLLRIFKITKYW). Residues 538–556 (ASLRNLVVSLMSSMKSIIS) are Cytoplasmic-facing. Residues 557–576 (LLFLLFLFIVVFALLGMQLF) form a helical membrane-spanning segment. Over 577-629 (GGRFNFNDGTPSANFDTFPAAIMTVFQILTGEDWNEVMYNGIRSQGGVSSGMW) the chain is Extracellular. The chain crosses the membrane as a helical span at residues 630 to 654 (SAIYFIVLTLFGNYTLLNVFLAIAV). Over 655–1100 (DNLANAQELT…TNPIRKACHY (446 aa)) the chain is Cytoplasmic. The interval 680–727 (LQKAKEVSPMSAPNMPSIERDRRRRHHMSMWEPRSSHLRERRRRHHMS) is disordered. Residues Ser-687, Ser-696, Ser-744, Ser-766, and Ser-806 each carry the phosphoserine modification. Disordered stretches follow at residues 820–944 (NQRS…VPRG) and 1042–1076 (NKTD…RETG). A compositionally biased stretch (basic residues) spans 864–877 (RHRQSQRRSRHRRV). Over residues 884–896 (SASASRSRSASQE) the composition is skewed to low complexity. Residue Ser-898 is modified to Phosphoserine. Composition is skewed to basic and acidic residues over residues 906–935 (DGEK…DLRR) and 1044–1055 (TDGEASPLKEAE). Ser-1049 is modified (phosphoserine). The stretch at 1092 to 1378 (NPIRKACHYI…IFVALIIITF (287 aa)) is one III repeat. The chain crosses the membrane as a helical span at residues 1101-1117 (IVNLRYFEMCILLVIAA). The Extracellular portion of the chain corresponds to 1118-1141 (SSIALAAEDPVLTNSERNKVLRYF). A helical transmembrane segment spans residues 1142–1161 (DYVFTGVFTFEMVIKMIDQG). Topologically, residues 1162-1169 (LILQDGSY) are cytoplasmic. Residues 1170-1192 (FRDLWNILDFVVVVGALVAFALA) form a helical membrane-spanning segment. The Extracellular portion of the chain corresponds to 1193-1206 (NALGTNKGRDIKTI). A helical transmembrane segment spans residues 1207–1224 (KSLRVLRVLRPLKTIKRL). Residues 1225 to 1243 (PKLKAVFDCVVTSLKNVFN) are Cytoplasmic-facing. A helical membrane pass occupies residues 1244 to 1263 (ILIVYKLFMFIFAVIAVQLF). At 1264-1350 (KGKFFYCTDS…RGPSRSNRME (87 aa)) the chain is on the extracellular side. A helical transmembrane segment spans residues 1351-1374 (MSIFYVVYFVVFPFFFVNIFVALI). At 1375-1431 (IITFQEQGDKMMEECSLEKNERACIDFAISAKPLTRYMPQNRHTFQYRVWHFVVSPS) the chain is on the cytoplasmic side. The IV repeat unit spans residues 1415–1678 (NRHTFQYRVW…LFVAVIMDNF (264 aa)). Residues 1432–1450 (FEYTIMAMIALNTVVLMMK) form a helical membrane-spanning segment. Topologically, residues 1451-1467 (YYSAPWTYELALKYLNI) are extracellular. Residues 1468-1485 (AFTMVFSLECVLKVIAFG) form a helical membrane-spanning segment. The Cytoplasmic segment spans residues 1486–1493 (FLNYFRDT). Residues 1494-1512 (WNIFDFITVIGSITEIILT) traverse the membrane as a helical segment. The Extracellular segment spans residues 1513–1523 (DSKLVNTSGFN). N-linked (GlcNAc...) asparagine glycans are attached at residues Asn-1518 and Asn-1523. A helical membrane pass occupies residues 1524–1542 (MSFLKLFRAARLIKLLRQG). At 1543 to 1561 (YTIRILLWTFVQSFKALPY) the chain is on the cytoplasmic side. The helical transmembrane segment at 1562–1581 (VCLLIAMLFFIYAIIGMQVF) threads the bilayer. Residues 1582-1650 (GNIKLDEESH…NESERCGTDL (69 aa)) are Extracellular-facing. Asn-1641 carries N-linked (GlcNAc...) asparagine glycosylation. A helical transmembrane segment spans residues 1651–1676 (AYVYFVSFIFFCSFLMLNLFVAVIMD). Over 1677–2222 (NFEYLTRDSS…LSDTEEDDKC (546 aa)) the chain is Cytoplasmic. Residues 1691 to 1726 (HHLDEFVRVWAEYDRAACGRIHYTEMYEMLTLMSPP) form the EF-hand domain. The Ca(2+) site is built by Asp-1704, Arg-1710, and Glu-1715. The disordered stretch occupies residues 1970-2135 (SAHRLNSDSG…QQGQHPSPQH (166 aa)). A compositionally biased stretch (basic and acidic residues) spans 1974-1994 (LNSDSGHKSDTHRSGGRERGR). A phosphoserine mark is found at Ser-2003 and Ser-2022. A compositionally biased stretch (basic and acidic residues) spans 2010-2027 (NSEERGTQADWESPERRQ). A compositionally biased stretch (low complexity) spans 2046–2061 (SLSESSIPSISDTSTP). The segment covering 2104 to 2123 (LASQALESNSACLTESSNSL) has biased composition (polar residues). Residues 2124–2135 (HPQQGQHPSPQH) are compositionally biased toward low complexity.

It belongs to the calcium channel alpha-1 subunit (TC 1.A.1.11) family. CACNA1E subfamily. Interacts with EFHC1. Voltage-dependent calcium channels are multisubunit complexes, consisting of alpha-1, alpha-2, beta and delta subunits in a 1:1:1:1 ratio. The channel activity is directed by the pore-forming and voltage-sensitive alpha-1 subunit. In many cases, this subunit is sufficient to generate voltage-sensitive calcium channel activity. The auxiliary subunits beta and alpha-2/delta linked by a disulfide bridge regulate the channel activity. As to expression, expressed in central nervous system and in insulinoma.

It localises to the membrane. It carries out the reaction Ca(2+)(in) = Ca(2+)(out). Functionally, voltage-sensitive calcium channels (VSCC) mediate the entry of calcium ions into excitable cells and are also involved in a variety of calcium-dependent processes, including muscle contraction, hormone or neurotransmitter release, gene expression, cell motility, cell division and cell death. The isoform alpha-1E gives rise to R-type calcium currents. R-type calcium channels belong to the 'high-voltage activated' (HVA) group and are blocked by nickel. They are however insensitive to dihydropyridines (DHP). Calcium channels containing alpha-1E subunit could be involved in the modulation of firing patterns of neurons which is important for information processing. The chain is Voltage-dependent R-type calcium channel subunit alpha-1E (Cacna1e) from Rattus norvegicus (Rat).